The primary structure comprises 2368 residues: Highly reducing polyketide synthase cla2 (2368 aa).

The region spanning 10-434 is the Ketosynthase family 3 (KS3) domain; sequence QIPIAIVGLG…GTNGLVVLEA (425 aa). Residues C182, H317, and H357 each act as for beta-ketoacyl synthase activity in the active site. Residues 548-877 are malonyl-CoA:ACP transacylase (MAT) domain; the sequence is FVFTGQGAQW…RGQNALDTSL (330 aa). Catalysis depends on S638, which acts as the For malonyltransferase activity. The interval 936 to 1071 is N-terminal hotdog fold; that stretch reads HSMIGLKQPM…GLVAIEYTNK (136 aa). Positions 936 to 1175 are dehydratase (DH) domain; that stretch reads HSMIGLKQPM…AIFQSIFGST (240 aa). The PKS/mFAS DH domain maps to 936-1255; it reads HSMIGLKQPM…MTEPEVGDDA (320 aa). H968 (proton acceptor; for dehydratase activity) is an active-site residue. The interval 1099-1255 is C-terminal hotdog fold; the sequence is PLMIRREKFY…MTEPEVGDDA (157 aa). D1165 acts as the Proton donor; for dehydratase activity in catalysis. The enoylreductase (ER) domain stretch occupies residues 1655-1967; sequence GFLDSLQFIK…QGKHRGKLVL (313 aa). The tract at residues 1991–2170 is catalytic ketoreductase (KRc) domain; sequence ATYLIIGGLG…AVAVNLTIIR (180 aa). One can recognise a Carrier domain in the interval 2283-2360; the sequence is QASEIITEGL…VLAKTIASRS (78 aa). S2320 is modified (O-(pantetheine 4'-phosphoryl)serine).

It participates in secondary metabolite biosynthesis. Functionally, highly reducing polyketide synthase; part of the gene cluster that mediates the biosynthesis of cladosporin, a tricyclic octaketide that acts as an antimalarial agent though inhibition of the Plasmodium falciparum lysyl-tRNA synthetase. The highly reducing polyketide synthase cla2 is responsible for biosynthesis up to the pentaketide stage, including of the tetrahydropyran (THP) ring, whereas the three subsequent ketide extensions with no reduction are catalyzed by the non-reducing polyketide synthase cla3. This is Highly reducing polyketide synthase cla2 from Cladosporium cladosporioides.